Reading from the N-terminus, the 315-residue chain is MSAEAVKKLSFEIAPSEEESEATIEQQDVACGLENLPVSLWPLGAGPRPKPFQYTPDHVAGPGVDMDPTQITFPGCACIKTPCVPGTCSCLRHESNYNDNLCLRDVGSEAKYAKPVFECNVLCQCGEHCRNRVVQSGLQFLLQVFQTEKKGWGLRTLEYIPKGRFVCEYAGEVLGFSEVQRRIHLQTAHDPNYIIALREHTYNGQVMETFVDPTYIGNIGRFLNHSCEPNLLMIPVRIDSMVPKLALFAAKDILPGEELSYDYSGRFLNQISSKDKERIDCGQPRKPCYCGAQSCATFLPYDSSLYGPLENPGTS.

The 64-residue stretch at 74–137 (PGCACIKTPC…HCRNRVVQSG (64 aa)) folds into the Pre-SET domain. Zn(2+)-binding residues include Cys-76, Cys-78, Cys-83, Cys-88, Cys-90, Cys-119, Cys-123, Cys-125, and Cys-129. One can recognise an SET domain in the interval 140–264 (FLLQVFQTEK…PGEELSYDYS (125 aa)). S-adenosyl-L-methionine is bound by residues 150–152 (KGW), Tyr-193, Arg-221, and 224–225 (NH). Zn(2+) contacts are provided by Cys-227, Cys-288, Cys-290, and Cys-295. A Post-SET domain is found at 284 to 300 (PRKPCYCGAQSCATFLP).

This sequence belongs to the class V-like SAM-binding methyltransferase superfamily.

It is found in the nucleus. The protein resides in the chromosome. It catalyses the reaction L-lysyl(36)-[histone H3] + 2 S-adenosyl-L-methionine = N(6),N(6)-dimethyl-L-lysyl(36)-[histone H3] + 2 S-adenosyl-L-homocysteine + 2 H(+). In terms of biological role, histone methyltransferase that methylates 'Lys-4' and 'Lys-36' of histone H3, 2 specific tags for epigenetic transcriptional activation. Specifically mediates dimethylation of H3 'Lys-36'. This chain is Histone-lysine N-methyltransferase SETMAR, found in Rattus norvegicus (Rat).